A 219-amino-acid polypeptide reads, in one-letter code: Thiopurine S-methyltransferase (219 aa).

Positions 10, 45, 66, and 123 each coordinate S-adenosyl-L-methionine.

It belongs to the class I-like SAM-binding methyltransferase superfamily. TPMT family.

The protein resides in the cytoplasm. The catalysed reaction is S-adenosyl-L-methionine + a thiopurine = S-adenosyl-L-homocysteine + a thiopurine S-methylether.. The polypeptide is Thiopurine S-methyltransferase (Bordetella bronchiseptica (strain ATCC BAA-588 / NCTC 13252 / RB50) (Alcaligenes bronchisepticus)).